The sequence spans 160 residues: uncharacterized protein (160 aa).

A helical transmembrane segment spans residues 137–157 (YNILFVVVILLLLFVAWRCYV).

It localises to the host membrane. It is found in the virion. This is an uncharacterized protein from Acanthamoeba polyphaga mimivirus (APMV).